The primary structure comprises 218 residues: Peroxiredoxin-like 2A (218 aa).

Residues methionine 3–valine 101 are thioredoxin-like fold. Active-site redox-active residues include cysteine 74 and cysteine 77.

The protein belongs to the peroxiredoxin-like PRXL2 family. PRXL2A subfamily. In terms of tissue distribution, expressed in kidney, liver, skin, and brain. Widely expressed with highest levels detected in adipose tissue.

The protein localises to the cytoplasm. It localises to the secreted. Involved in redox regulation of the cell. Acts as an antioxidant. Inhibits TNFSF11-induced NFKB1 and JUN activation and osteoclast differentiation. May affect bone resorption and help to maintain bone mass. Acts as a negative regulator of macrophage-mediated inflammation by inhibiting macrophage production of inflammatory cytokines, probably through suppression of the MAPK signaling pathway. This is Peroxiredoxin-like 2A (Prxl2a) from Mus musculus (Mouse).